We begin with the raw amino-acid sequence, 184 residues long: Ribosome-recycling factor (184 aa).

Belongs to the RRF family.

The protein resides in the cytoplasm. Responsible for the release of ribosomes from messenger RNA at the termination of protein biosynthesis. May increase the efficiency of translation by recycling ribosomes from one round of translation to another. This Stenotrophomonas maltophilia (strain K279a) protein is Ribosome-recycling factor.